A 1209-amino-acid polypeptide reads, in one-letter code: Pre-mRNA-splicing factor rse1 (1209 aa).

It belongs to the RSE1 family. Associated with the spliceosome.

The protein localises to the nucleus. Its function is as follows. Involved in pre-mRNA splicing and cell cycle control. The protein is Pre-mRNA-splicing factor rse1 (msp-5) of Neurospora crassa (strain ATCC 24698 / 74-OR23-1A / CBS 708.71 / DSM 1257 / FGSC 987).